A 62-amino-acid chain; its full sequence is Keratin-associated protein 6-2 (62 aa).

It belongs to the KRTAP type 6 family. Interacts with hair keratins.

Its function is as follows. In the hair cortex, hair keratin intermediate filaments are embedded in an interfilamentous matrix, consisting of hair keratin-associated proteins (KRTAP), which are essential for the formation of a rigid and resistant hair shaft through their extensive disulfide bond cross-linking with abundant cysteine residues of hair keratins. The matrix proteins include the high-sulfur and high-glycine-tyrosine keratins. The protein is Keratin-associated protein 6-2 (KRTAP6-2) of Homo sapiens (Human).